The sequence spans 183 residues: Porphobilinogen deaminase (183 aa).

It belongs to the HMBS family. In terms of assembly, monomer. It depends on dipyrromethane as a cofactor.

The catalysed reaction is 4 porphobilinogen + H2O = hydroxymethylbilane + 4 NH4(+). It functions in the pathway porphyrin-containing compound metabolism; protoporphyrin-IX biosynthesis; coproporphyrinogen-III from 5-aminolevulinate: step 2/4. Tetrapolymerization of the monopyrrole PBG into the hydroxymethylbilane pre-uroporphyrinogen in several discrete steps. The protein is Porphobilinogen deaminase (hemC) of Yersinia intermedia.